Here is a 65-residue protein sequence, read N- to C-terminus: Sodium channel neurotoxin MeuNaTxalpha-9 (65 aa).

Positions 2–64 (RDGYIANDRN…VPIRIPGECR (63 aa)) constitute an LCN-type CS-alpha/beta domain. 4 cysteine pairs are disulfide-bonded: cysteine 12–cysteine 63, cysteine 16–cysteine 36, cysteine 22–cysteine 46, and cysteine 26–cysteine 48. Arginine amide is present on arginine 64.

The protein belongs to the long (4 C-C) scorpion toxin superfamily. Sodium channel inhibitor family. Alpha subfamily. In terms of tissue distribution, expressed by the venom gland.

The protein resides in the secreted. In terms of biological role, alpha toxins bind voltage-independently at site-3 of sodium channels (Nav) and inhibit the inactivation of the activated channels, thereby blocking neuronal transmission. The polypeptide is Sodium channel neurotoxin MeuNaTxalpha-9 (Mesobuthus eupeus (Lesser Asian scorpion)).